A 546-amino-acid polypeptide reads, in one-letter code: Probable malate:quinone oxidoreductase (546 aa).

The protein belongs to the MQO family. FAD is required as a cofactor.

The enzyme catalyses (S)-malate + a quinone = a quinol + oxaloacetate. It functions in the pathway carbohydrate metabolism; tricarboxylic acid cycle; oxaloacetate from (S)-malate (quinone route): step 1/1. The sequence is that of Probable malate:quinone oxidoreductase from Acinetobacter baumannii (strain ACICU).